Reading from the N-terminus, the 328-residue chain is Porphobilinogen deaminase (328 aa).

Cys245 bears the S-(dipyrrolylmethanemethyl)cysteine mark.

Belongs to the HMBS family. As to quaternary structure, monomer. It depends on dipyrromethane as a cofactor.

It carries out the reaction 4 porphobilinogen + H2O = hydroxymethylbilane + 4 NH4(+). It functions in the pathway porphyrin-containing compound metabolism; protoporphyrin-IX biosynthesis; coproporphyrinogen-III from 5-aminolevulinate: step 2/4. The protein operates within porphyrin-containing compound metabolism; chlorophyll biosynthesis. Its function is as follows. Tetrapolymerization of the monopyrrole PBG into the hydroxymethylbilane pre-uroporphyrinogen in several discrete steps. The sequence is that of Porphobilinogen deaminase from Gloeobacter violaceus (strain ATCC 29082 / PCC 7421).